Consider the following 1114-residue polypeptide: WD repeat-containing protein 72 (1114 aa).

7 WD repeats span residues Ala-15 to Ala-54, Gly-60 to Lys-102, Lys-160 to Gln-197, Glu-327 to Asp-373, Gly-413 to Leu-452, Gly-470 to Thr-515, and Lys-566 to His-605. 2 disordered regions span residues Ser-634–Pro-658 and Ser-749–Lys-798. Positions Lys-780–Pro-796 are enriched in basic residues. Phosphoserine occurs at positions 1093 and 1095.

In terms of tissue distribution, expressed in maturation stage ameloblasts (at protein level).

It localises to the cytoplasmic vesicle. Its function is as follows. Plays a major role in formation of tooth enamel. Specifically required during the maturation phase of amelogenesis for normal formation of the enamel matrix and clearance of enamel proteins. May be involved in localization of the calcium transporter SLC24A4 to the ameloblast cell membrane. This chain is WD repeat-containing protein 72, found in Mus musculus (Mouse).